A 327-amino-acid chain; its full sequence is MIYQMQMPAKIEVDEATHTEMFGRFIAQPLERGYGVTIGNVMRRVLLASLPGTAITGVKIEGVYHEFSAIEGVREDVPEIVLNLKRVRFKSNCKRSCKTSLSIAGTKDFTAGDIIAKEGEFEVLNKDLHIATVNDGSVLNIEIYIGRGRGYLPAEENHPEGMPIGFIAIDAIFTPIRNVKFTVENTRVGQRTDYEKMILDVETDGSIAPDDSISLAGKIINDHIMYFANFSPTEEEFTEEEFKQQDDEFESMRKLLHTKIEDLDLSVRSHNCLRLAEIDTIGDLVSRKEDELLNYKNFGKKSLTELKEQLEKFDLKFGMDITRYQMK.

The interval 1–231 (MIYQMQMPAK…DHIMYFANFS (231 aa)) is alpha N-terminal domain (alpha-NTD). Positions 247 to 327 (DEFESMRKLL…GMDITRYQMK (81 aa)) are alpha C-terminal domain (alpha-CTD).

Belongs to the RNA polymerase alpha chain family. Homodimer. The RNAP catalytic core consists of 2 alpha, 1 beta, 1 beta' and 1 omega subunit. When a sigma factor is associated with the core the holoenzyme is formed, which can initiate transcription.

The enzyme catalyses RNA(n) + a ribonucleoside 5'-triphosphate = RNA(n+1) + diphosphate. In terms of biological role, DNA-dependent RNA polymerase catalyzes the transcription of DNA into RNA using the four ribonucleoside triphosphates as substrates. The chain is DNA-directed RNA polymerase subunit alpha from Chlorobium phaeobacteroides (strain DSM 266 / SMG 266 / 2430).